A 128-amino-acid polypeptide reads, in one-letter code: L-ectoine synthase (128 aa).

Belongs to the ectoine synthase family.

It carries out the reaction (2S)-4-acetamido-2-aminobutanoate = L-ectoine + H2O. It functions in the pathway amine and polyamine biosynthesis; ectoine biosynthesis; L-ectoine from L-aspartate 4-semialdehyde: step 3/3. Its function is as follows. Catalyzes the circularization of gamma-N-acetyl-alpha,gamma-diaminobutyric acid (ADABA) to ectoine (1,4,5,6-tetrahydro-2-methyl-4-pyrimidine carboxylic acid), which is an excellent osmoprotectant. The protein is L-ectoine synthase of Aliivibrio fischeri (strain ATCC 700601 / ES114) (Vibrio fischeri).